A 404-amino-acid chain; its full sequence is Probable tRNA sulfurtransferase (404 aa).

In terms of domain architecture, THUMP spans 60-165 (TAVAESLKQV…EEAAYLSYET (106 aa)). ATP contacts are provided by residues 183-184 (ML), 208-209 (HF), R265, G287, and Q296.

It belongs to the ThiI family.

It localises to the cytoplasm. The enzyme catalyses [ThiI sulfur-carrier protein]-S-sulfanyl-L-cysteine + a uridine in tRNA + 2 reduced [2Fe-2S]-[ferredoxin] + ATP + H(+) = [ThiI sulfur-carrier protein]-L-cysteine + a 4-thiouridine in tRNA + 2 oxidized [2Fe-2S]-[ferredoxin] + AMP + diphosphate. It catalyses the reaction [ThiS sulfur-carrier protein]-C-terminal Gly-Gly-AMP + S-sulfanyl-L-cysteinyl-[cysteine desulfurase] + AH2 = [ThiS sulfur-carrier protein]-C-terminal-Gly-aminoethanethioate + L-cysteinyl-[cysteine desulfurase] + A + AMP + 2 H(+). The protein operates within cofactor biosynthesis; thiamine diphosphate biosynthesis. In terms of biological role, catalyzes the ATP-dependent transfer of a sulfur to tRNA to produce 4-thiouridine in position 8 of tRNAs, which functions as a near-UV photosensor. Also catalyzes the transfer of sulfur to the sulfur carrier protein ThiS, forming ThiS-thiocarboxylate. This is a step in the synthesis of thiazole, in the thiamine biosynthesis pathway. The sulfur is donated as persulfide by IscS. The sequence is that of Probable tRNA sulfurtransferase from Streptococcus pneumoniae (strain 70585).